The primary structure comprises 864 residues: Eukaryotic translation initiation factor 3 subunit C (864 aa).

Residues 1-77 form a disordered region; sequence MSRFFARGGS…EESEDEERVT (77 aa). Residues 14–54 are compositionally biased toward acidic residues; sequence SSSEDEQELYSDREEEEQFSDSEEESSEAESSEEESSDDEG. Positions 602–776 constitute a PCI domain; that stretch reads FHMHINLELL…NAIVFRKGVE (175 aa). Residues 815-864 form a disordered region; the sequence is RDQGAGARGGRGAGRGGQARGGPRFPGGQQGRRPGGQQFSGGALGGAIKA. Gly residues predominate over residues 820–864; the sequence is GARGGRGAGRGGQARGGPRFPGGQQGRRPGGQQFSGGALGGAIKA.

This sequence belongs to the eIF-3 subunit C family. As to quaternary structure, component of the eukaryotic translation initiation factor 3 (eIF-3) complex.

Its subcellular location is the cytoplasm. Functionally, component of the eukaryotic translation initiation factor 3 (eIF-3) complex, which is involved in protein synthesis of a specialized repertoire of mRNAs and, together with other initiation factors, stimulates binding of mRNA and methionyl-tRNAi to the 40S ribosome. The eIF-3 complex specifically targets and initiates translation of a subset of mRNAs involved in cell proliferation. In Aspergillus terreus (strain NIH 2624 / FGSC A1156), this protein is Eukaryotic translation initiation factor 3 subunit C (nip1).